The primary structure comprises 329 residues: MVKTQRVVITPGEPAGIGPDLVVQLAQREWPVELVVCADATLLTNRAAMLGLPLTLRPYSPNSPAQPQTAGTLTLLPVALRESVTAGQLAVENGHYVVETLARACDGCLNGEFAALITGPVHKGVINDAGIPFTGHTEFFEERSQAKKVVMMLATEELRVALATTHLPLRDIADAITPALLHEVIAILHHDLRTKFGIAEPRILVCGLNPHAGEGGHMGTEEIDTIIPVLDELRAQGMKLNGPLPADTLFQPKYLDNADAVLAMYHDQGLPVLKYQGFGRGVNITLGLPFIRTSVDHGTALELAGRGKADVGSFITALNLAIKMIVNTQ.

Substrate-binding residues include His136 and Thr137. 3 residues coordinate a divalent metal cation: His166, His211, and His266. Residues Lys274, Asn283, and Arg292 each contribute to the substrate site.

This sequence belongs to the PdxA family. In terms of assembly, homodimer. Zn(2+) is required as a cofactor. Mg(2+) serves as cofactor. It depends on Co(2+) as a cofactor.

Its subcellular location is the cytoplasm. It catalyses the reaction 4-(phosphooxy)-L-threonine + NAD(+) = 3-amino-2-oxopropyl phosphate + CO2 + NADH. It participates in cofactor biosynthesis; pyridoxine 5'-phosphate biosynthesis; pyridoxine 5'-phosphate from D-erythrose 4-phosphate: step 4/5. Functionally, catalyzes the NAD(P)-dependent oxidation of 4-(phosphooxy)-L-threonine (HTP) into 2-amino-3-oxo-4-(phosphooxy)butyric acid which spontaneously decarboxylates to form 3-amino-2-oxopropyl phosphate (AHAP). The chain is 4-hydroxythreonine-4-phosphate dehydrogenase from Escherichia coli O17:K52:H18 (strain UMN026 / ExPEC).